Reading from the N-terminus, the 549-residue chain is Chaperonin GroEL 3 (549 aa).

ATP is bound by residues 29–32 (TLGP), 86–90 (DGTTT), glycine 414, 477–479 (NAA), and aspartate 493.

It belongs to the chaperonin (HSP60) family. Forms a cylinder of 14 subunits composed of two heptameric rings stacked back-to-back. Interacts with the co-chaperonin GroES.

The protein resides in the cytoplasm. It carries out the reaction ATP + H2O + a folded polypeptide = ADP + phosphate + an unfolded polypeptide.. In terms of biological role, together with its co-chaperonin GroES, plays an essential role in assisting protein folding. The GroEL-GroES system forms a nano-cage that allows encapsulation of the non-native substrate proteins and provides a physical environment optimized to promote and accelerate protein folding. This chain is Chaperonin GroEL 3, found in Frankia casuarinae (strain DSM 45818 / CECT 9043 / HFP020203 / CcI3).